The primary structure comprises 384 residues: 23S rRNA (uracil(747)-C(5))-methyltransferase RlmC (384 aa).

[4Fe-4S] cluster contacts are provided by Cys-7, Cys-15, Cys-18, and Cys-94. S-adenosyl-L-methionine is bound by residues Gln-219, Phe-248, Glu-269, and Asn-316. Cys-343 functions as the Nucleophile in the catalytic mechanism.

Belongs to the class I-like SAM-binding methyltransferase superfamily. RNA M5U methyltransferase family. RlmC subfamily.

The catalysed reaction is uridine(747) in 23S rRNA + S-adenosyl-L-methionine = 5-methyluridine(747) in 23S rRNA + S-adenosyl-L-homocysteine + H(+). In terms of biological role, catalyzes the formation of 5-methyl-uridine at position 747 (m5U747) in 23S rRNA. This chain is 23S rRNA (uracil(747)-C(5))-methyltransferase RlmC, found in Shewanella sp. (strain ANA-3).